A 381-amino-acid chain; its full sequence is Trans-enoyl reductase iliB (381 aa).

50-53 provides a ligand contact to NADP(+); it reads VDGK. 145-152 lines the substrate pocket; sequence ATLATVGL. Residues 213-216, Tyr231, and 278-279 contribute to the NADP(+) site; these read SPGS and LD. 298-302 serves as a coordination point for substrate; sequence TYTQF. 367–368 lines the NADP(+) pocket; it reads IS.

This sequence belongs to the zinc-containing alcohol dehydrogenase family. Monomer.

The catalysed reaction is N-[(4E,6E,10S,12Z,14E)-6,10-dimethyl-3-oxohexadeca-4,6,12,14-tetraenoyl]-L-tyrosyl-[ACP] = (3E,5S)-3-[(2E,4E,8S,10E,12Z)-1-hydroxy-4,8-dimethyltetradeca-2,4,10,12-tetraen-1-ylidene]-5-[(4-hydroxyphenyl)methyl]pyrrolidine-2,4-dione + holo-[ACP] + H(+). Its pathway is mycotoxin biosynthesis. Its function is as follows. Trans-enoyl reductase; part of the gene cluster that mediates the biosynthesis of ilicicolin H, a 4-hydroxy-2-pyridonealkaloid that has potent and broad antifungal activities by inhibiting the mitochondrial respiration chain. IliB collaborates with the hybrid PKS-NRPS synthetase iliA to assemble the backbone of ilicicolin H. The PKS portion of iliA and trans-acting enoyl reductase iliB work together to construct an octaketide, and two methyl groups are introduced by the MT domain of iliA during the chain assembly. The nascent chain is then condensed with tyrosine, catalyzed by the iliA C domain, and the resulting PKS-NRPS hybrid is offloaded by the iliA RED domain to form an advanced tetramic acid intermediate. The biosynthesis of ilicicolin H starts with formation of the tetramic acid by the hybrid PKS-NRPS synthetase iliA with the partnering trans-enoyl reductase iliB since iliA lacks a designated enoylreductase (ER) domain. The cytochrome P450 monooxygenase iliC then catalyzes the ring expansion of the tetramate to the acyclic 2-pyridone. The pericyclase iliD further converts the acyclic 2-pyridone into 8-epi-ilicicolin H. 8-epi-ilicicolin H might then spontaneously convert to ilicicolin H since ilicicolin H is produced in the absence of the epimerase iliE, in contrast to what was observed for the Talaromyces variabilis ilicolin H biosynthetic pathway. This Neonectria sp. (strain DH2) protein is Trans-enoyl reductase iliB.